The primary structure comprises 1244 residues: SWI/SNF chromatin remodeling complex subunit swsn-7 (1244 aa).

Residues 24–116 (QRKMAEFYNS…YLSKFEQVET (93 aa)) form the ARID domain. Positions 486–496 (FTQGSNQQQNP) are enriched in polar residues. Disordered stretches follow at residues 486-534 (FTQG…GAAP), 556-583 (NREQ…ILAH), and 597-619 (DRRT…ESQL). Positions 497–508 (HHSQGGHQLGHS) are enriched in low complexity. Residues 556 to 566 (NREQYSTQSSQ) are compositionally biased toward polar residues. The segment covering 567-578 (PHPPHTNVPPSP) has biased composition (pro residues). The segment covering 610-619 (PSTNSGESQL) has biased composition (polar residues). Positions 623–697 (TEKWIRQNCV…IVAQGIRLIR (75 aa)) form a DNA-binding region, RFX-type winged-helix. Positions 1134–1244 (EEEQQKMLSE…TTPVRAGAGI (111 aa)) are disordered. A compositionally biased stretch (low complexity) spans 1142-1158 (SEVPSSASLSSMAGSSS). 2 stretches are compositionally biased toward polar residues: residues 1159–1186 (QLPT…SNKP) and 1194–1212 (LNFS…FTAG). Low complexity predominate over residues 1220–1231 (PIQQHIPSQPSP).

Component of the SWI/SNF-B (PBAF) chromatin remodeling complex.

It is found in the nucleus. Involved in transcriptional activation and repression of select genes by chromatin remodeling (alteration of DNA-nucleosome topology). Required for the stability of the SWI/SNF chromatin remodeling complex SWI/SNF-B (PBAF). Required for regulation of a stress response gene network, probably as part of the PBAF complex and perhaps acting in concert with histone demethylase jmjc-1. Binds to the ethanol and stress response elements (ESRE) in the promoter regions of hsp-16.1 and hsp-16.2, probably as part of the PBAF complex. The polypeptide is SWI/SNF chromatin remodeling complex subunit swsn-7 (Caenorhabditis elegans).